Here is a 458-residue protein sequence, read N- to C-terminus: Phosphoglucosamine mutase (458 aa).

Ser102 (phosphoserine intermediate) is an active-site residue. Ser102, Asp252, Asp254, and Asp256 together coordinate Mg(2+). Ser102 is subject to Phosphoserine.

It belongs to the phosphohexose mutase family. Requires Mg(2+) as cofactor. Activated by phosphorylation.

It catalyses the reaction alpha-D-glucosamine 1-phosphate = D-glucosamine 6-phosphate. Its function is as follows. Catalyzes the conversion of glucosamine-6-phosphate to glucosamine-1-phosphate. The chain is Phosphoglucosamine mutase from Anaeromyxobacter dehalogenans (strain 2CP-C).